Here is a 364-residue protein sequence, read N- to C-terminus: Chorismate synthase (364 aa).

The NADP(+) site is built by R48 and R54. FMN contacts are provided by residues 125–127 (RSS), 238–239 (NA), G278, 293–297 (KPTSS), and R319.

It belongs to the chorismate synthase family. In terms of assembly, homotetramer. The cofactor is FMNH2.

The enzyme catalyses 5-O-(1-carboxyvinyl)-3-phosphoshikimate = chorismate + phosphate. Its pathway is metabolic intermediate biosynthesis; chorismate biosynthesis; chorismate from D-erythrose 4-phosphate and phosphoenolpyruvate: step 7/7. In terms of biological role, catalyzes the anti-1,4-elimination of the C-3 phosphate and the C-6 proR hydrogen from 5-enolpyruvylshikimate-3-phosphate (EPSP) to yield chorismate, which is the branch point compound that serves as the starting substrate for the three terminal pathways of aromatic amino acid biosynthesis. This reaction introduces a second double bond into the aromatic ring system. This Shewanella woodyi (strain ATCC 51908 / MS32) protein is Chorismate synthase.